The following is a 131-amino-acid chain: Small ribosomal subunit protein bS6 (131 aa).

The interval 96–131 (VTEASPMAKAKDERDSRRGPAGDRSYDEANAEEIAE) is disordered. Residues 104 to 122 (KAKDERDSRRGPAGDRSYD) are compositionally biased toward basic and acidic residues.

The protein belongs to the bacterial ribosomal protein bS6 family.

In terms of biological role, binds together with bS18 to 16S ribosomal RNA. The protein is Small ribosomal subunit protein bS6 of Shewanella sp. (strain ANA-3).